Here is a 217-residue protein sequence, read N- to C-terminus: Large ribosomal subunit protein uL4 (217 aa).

The interval 58–90 (TAATKGRSDVSGGGKKPWRQKGTGRARSGTSRS) is disordered.

Belongs to the universal ribosomal protein uL4 family. Part of the 50S ribosomal subunit.

One of the primary rRNA binding proteins, this protein initially binds near the 5'-end of the 23S rRNA. It is important during the early stages of 50S assembly. It makes multiple contacts with different domains of the 23S rRNA in the assembled 50S subunit and ribosome. In terms of biological role, forms part of the polypeptide exit tunnel. The polypeptide is Large ribosomal subunit protein uL4 (Syntrophus aciditrophicus (strain SB)).